The chain runs to 569 residues: Urease subunit alpha (569 aa).

Residues G131 to L569 enclose the Urease domain. Positions 136, 138, and 219 each coordinate Ni(2+). N6-carboxylysine is present on K219. H221 contributes to the substrate binding site. Residues H248 and H274 each coordinate Ni(2+). H322 functions as the Proton donor in the catalytic mechanism. Residue D362 coordinates Ni(2+).

This sequence belongs to the metallo-dependent hydrolases superfamily. Urease alpha subunit family. In terms of assembly, heterotrimer of UreA (gamma), UreB (beta) and UreC (alpha) subunits. Three heterotrimers associate to form the active enzyme. Ni cation is required as a cofactor. Carboxylation allows a single lysine to coordinate two nickel ions.

The protein localises to the cytoplasm. It catalyses the reaction urea + 2 H2O + H(+) = hydrogencarbonate + 2 NH4(+). It functions in the pathway nitrogen metabolism; urea degradation; CO(2) and NH(3) from urea (urease route): step 1/1. The protein is Urease subunit alpha of Prochlorococcus marinus (strain NATL1A).